The chain runs to 124 residues: uncharacterized protein (124 aa).

Residues 1-65 (MAENSRYVRL…RPASSSNPDY (65 aa)) are disordered. The segment covering 37-47 (LNSNDAESQQV) has biased composition (polar residues).

This is an uncharacterized protein from Microplitis demolitor (Parasitoid wasp).